The sequence spans 357 residues: Meiotically up-regulated gene 135 protein (357 aa).

The protein belongs to the UPF0612 family.

It is found in the nucleus. Has a role in meiosis. This Schizosaccharomyces pombe (strain 972 / ATCC 24843) (Fission yeast) protein is Meiotically up-regulated gene 135 protein (mug135).